The primary structure comprises 314 residues: Melanoma-associated antigen 6 (314 aa).

Residues 1-20 (MPLEQRSQHCKPEEGLEARG) show a composition bias toward basic and acidic residues. Residues 1-99 (MPLEQRSQHC…QEEEGPSTFP (99 aa)) are disordered. Low complexity predominate over residues 21-44 (EALGLVGAQAPATEEQEAASSSST). Positions 65–87 (PQGASSLPTTMNYPLWSQSYEDS) are enriched in polar residues. The MAGE domain maps to 109–308 (LSRKVAKLVH…ISYPLLHEWA (200 aa)).

As to quaternary structure, interacts with TRIM28. In terms of processing, ubiquitinated by the DCX(DCAF12) complex specifically recognizes the diglutamate (Glu-Glu) at the C-terminus, leading to its degradation. As to expression, expressed in many tumors of several types, such as melanoma, head and neck squamous cell carcinoma, lung carcinoma and breast carcinoma, but not in normal tissues except for testes.

Functionally, activator of ubiquitin ligase activity of RING-type zinc finger-containing E3 ubiquitin-protein ligases that acts as a repressor of autophagy. May enhance ubiquitin ligase activity of TRIM28 and stimulate p53/TP53 ubiquitination by TRIM28. Proposed to act through recruitment and/or stabilization of the Ubl-conjugating enzyme (E2) at the E3:substrate complex. May play a role in tumor transformation or aspects of tumor progression. In vitro promotes cell viability in melanoma cell lines. This chain is Melanoma-associated antigen 6, found in Homo sapiens (Human).